The chain runs to 640 residues: Threonine--tRNA ligase (640 aa).

Residues 1 to 61 (MPIITLPDGS…DRDATLQIIT (61 aa)) enclose the TGS domain. The catalytic stretch occupies residues 242-533 (DHRRIGKQLD…LIEHYAGAFP (292 aa)). Residues C333, H384, and H510 each coordinate Zn(2+).

This sequence belongs to the class-II aminoacyl-tRNA synthetase family. In terms of assembly, homodimer. Requires Zn(2+) as cofactor.

Its subcellular location is the cytoplasm. It catalyses the reaction tRNA(Thr) + L-threonine + ATP = L-threonyl-tRNA(Thr) + AMP + diphosphate + H(+). Functionally, catalyzes the attachment of threonine to tRNA(Thr) in a two-step reaction: L-threonine is first activated by ATP to form Thr-AMP and then transferred to the acceptor end of tRNA(Thr). Also edits incorrectly charged L-seryl-tRNA(Thr). In Pseudomonas aeruginosa (strain LESB58), this protein is Threonine--tRNA ligase.